We begin with the raw amino-acid sequence, 315 residues long: Methionyl-tRNA formyltransferase (315 aa).

113–116 (SLLP) contributes to the (6S)-5,6,7,8-tetrahydrofolate binding site.

Belongs to the Fmt family.

It carries out the reaction L-methionyl-tRNA(fMet) + (6R)-10-formyltetrahydrofolate = N-formyl-L-methionyl-tRNA(fMet) + (6S)-5,6,7,8-tetrahydrofolate + H(+). Attaches a formyl group to the free amino group of methionyl-tRNA(fMet). The formyl group appears to play a dual role in the initiator identity of N-formylmethionyl-tRNA by promoting its recognition by IF2 and preventing the misappropriation of this tRNA by the elongation apparatus. The chain is Methionyl-tRNA formyltransferase from Pectobacterium atrosepticum (strain SCRI 1043 / ATCC BAA-672) (Erwinia carotovora subsp. atroseptica).